Here is a 376-residue protein sequence, read N- to C-terminus: Queuine tRNA-ribosyltransferase (376 aa).

Aspartate 89 serves as the catalytic Proton acceptor. Substrate-binding positions include 89–93, aspartate 143, glutamine 194, and glycine 221; that span reads DSGGF. The segment at 252 to 258 is RNA binding; that stretch reads GVGIPSN. Aspartate 271 functions as the Nucleophile in the catalytic mechanism. Residues 276-280 are RNA binding; important for wobble base 34 recognition; that stretch reads ARNGR. Positions 309, 311, 314, and 340 each coordinate Zn(2+).

The protein belongs to the queuine tRNA-ribosyltransferase family. As to quaternary structure, homodimer. Within each dimer, one monomer is responsible for RNA recognition and catalysis, while the other monomer binds to the replacement base PreQ1. The cofactor is Zn(2+).

The enzyme catalyses 7-aminomethyl-7-carbaguanine + guanosine(34) in tRNA = 7-aminomethyl-7-carbaguanosine(34) in tRNA + guanine. Its pathway is tRNA modification; tRNA-queuosine biosynthesis. In terms of biological role, catalyzes the base-exchange of a guanine (G) residue with the queuine precursor 7-aminomethyl-7-deazaguanine (PreQ1) at position 34 (anticodon wobble position) in tRNAs with GU(N) anticodons (tRNA-Asp, -Asn, -His and -Tyr). Catalysis occurs through a double-displacement mechanism. The nucleophile active site attacks the C1' of nucleotide 34 to detach the guanine base from the RNA, forming a covalent enzyme-RNA intermediate. The proton acceptor active site deprotonates the incoming PreQ1, allowing a nucleophilic attack on the C1' of the ribose to form the product. After dissociation, two additional enzymatic reactions on the tRNA convert PreQ1 to queuine (Q), resulting in the hypermodified nucleoside queuosine (7-(((4,5-cis-dihydroxy-2-cyclopenten-1-yl)amino)methyl)-7-deazaguanosine). This Clostridium botulinum (strain Okra / Type B1) protein is Queuine tRNA-ribosyltransferase.